Reading from the N-terminus, the 291-residue chain is MLTISVPATSANLGPGFDSIGLALDMQLTLQVLQPSDHWQIDHPFGADVPTDERNLIIKTALHLVPDLQPQHLQMASKIPLARGLGSSSTAIVAGLVLANELTGATRSSAELLEVATQLEGHPDNVAPALLGGLVVATNTDGRVRAVKLPLPMLFASVYVPNEPLLTTASRQALPTELAYHQAVTGSSVANTLVAALATQNWDVALPLLEQDQFHEQYRAKLVPALQTVRDHAHALGLTGTYLSGAGPTVITLGDYGQLATLQAQLSQDTTLTGQLFLLPMDATGVKVQKS.

Proline 80–threonine 90 is a binding site for ATP.

This sequence belongs to the GHMP kinase family. Homoserine kinase subfamily.

It is found in the cytoplasm. It catalyses the reaction L-homoserine + ATP = O-phospho-L-homoserine + ADP + H(+). The protein operates within amino-acid biosynthesis; L-threonine biosynthesis; L-threonine from L-aspartate: step 4/5. In terms of biological role, catalyzes the ATP-dependent phosphorylation of L-homoserine to L-homoserine phosphate. This is Homoserine kinase from Lactiplantibacillus plantarum (strain ATCC BAA-793 / NCIMB 8826 / WCFS1) (Lactobacillus plantarum).